The chain runs to 726 residues: X-ray repair cross-complementing protein 5 (726 aa).

The 153-residue stretch at 8-160 (AVVLCMDVGL…ANLKKAEITL (153 aa)) folds into the VWFA domain. The interval 137 to 164 (LSSPFSVDQLEVIIANLKKAEITLQFFL) is leucine-zipper. The segment covering 175 to 186 (GSSNNRGNAGSS) has biased composition (low complexity). The segment at 175 to 198 (GSSNNRGNAGSSDRGCGPGKGLSD) is disordered. In terms of domain architecture, Ku spans 253–449 (GSSLSIRIVG…NKKFTPTESQ (197 aa)). Residues 714-722 (EDEGDVDDL) carry the EEXXXDL motif motif.

This sequence belongs to the ku80 family. In terms of assembly, heterodimer composed of xrcc5/Ku80 and xrcc6/Ku70. In terms of processing, ubiquitinated via 'Lys-48'-linked polyubiquitination at DNA double strand break sites (DSBs), leading to its release from DSBs and subsequent proteasomal degradation. Polyubiquitination is not required for completion of NHEJ. Expressed at high levels in oocyte and testis.

Its subcellular location is the nucleus. Single-stranded DNA-dependent ATP-dependent helicase that plays a key role in DNA non-homologous end joining (NHEJ). The chain is X-ray repair cross-complementing protein 5 from Xenopus laevis (African clawed frog).